A 307-amino-acid polypeptide reads, in one-letter code: tRNA pseudouridine synthase B (307 aa).

Aspartate 41 serves as the catalytic Nucleophile.

This sequence belongs to the pseudouridine synthase TruB family. Type 1 subfamily.

It catalyses the reaction uridine(55) in tRNA = pseudouridine(55) in tRNA. Its function is as follows. Responsible for synthesis of pseudouridine from uracil-55 in the psi GC loop of transfer RNAs. The polypeptide is tRNA pseudouridine synthase B (Prochlorococcus marinus (strain MIT 9312)).